A 182-amino-acid chain; its full sequence is 7-carboxy-7-deazaguanine synthase (182 aa).

Residues 12 to 14 and R27 contribute to the substrate site; that span reads LQG. A Radical SAM core domain is found at 18-182; it reads HTGTPAVFIR…LQTHKLIDIR (165 aa). [4Fe-4S] cluster contacts are provided by C31, C35, and C38. T40 lines the Mg(2+) pocket. Residue T68 coordinates substrate. Residues G70 and 111–113 each bind S-adenosyl-L-methionine; that span reads SPK.

It belongs to the radical SAM superfamily. 7-carboxy-7-deazaguanine synthase family. Homodimer. [4Fe-4S] cluster serves as cofactor. S-adenosyl-L-methionine is required as a cofactor. It depends on Mg(2+) as a cofactor.

It carries out the reaction 6-carboxy-5,6,7,8-tetrahydropterin + H(+) = 7-carboxy-7-deazaguanine + NH4(+). It participates in purine metabolism; 7-cyano-7-deazaguanine biosynthesis. Its function is as follows. Catalyzes the complex heterocyclic radical-mediated conversion of 6-carboxy-5,6,7,8-tetrahydropterin (CPH4) to 7-carboxy-7-deazaguanine (CDG), a step common to the biosynthetic pathways of all 7-deazapurine-containing compounds. The polypeptide is 7-carboxy-7-deazaguanine synthase (Bacteroides thetaiotaomicron (strain ATCC 29148 / DSM 2079 / JCM 5827 / CCUG 10774 / NCTC 10582 / VPI-5482 / E50)).